We begin with the raw amino-acid sequence, 398 residues long: Homeobox protein knotted-1-like 1 (398 aa).

3 disordered regions span residues 43–69 (TFHL…PGTH), 172–192 (EFEA…DPEL), and 234–277 (NNNA…PRAE). Over residues 49-58 (SGGGGGGGSG) the composition is skewed to gly residues. The region spanning 280–300 (ELKNHLLRKYSGYLSSLKQEL) is the ELK domain. Residues 301 to 364 (SKKKKKGKLP…NQRKRHWKPS (64 aa)) constitute a DNA-binding region (homeobox; TALE-type).

Belongs to the TALE/KNOX homeobox family. As to expression, expressed only in the stems.

It localises to the nucleus. Functionally, probably binds to the DNA sequence 5'-TGAC-3'. This Malus domestica (Apple) protein is Homeobox protein knotted-1-like 1.